Reading from the N-terminus, the 506-residue chain is 5-OH-xanthotoxin synthase (506 aa).

The helical transmembrane segment at 3–23 (PVVIFLVLAFPIASVYLLFYH) threads the bilayer. The substrate specificity stretch occupies residues 365 to 370 (TGPLLI). Cys446 is a heme binding site.

The protein belongs to the cytochrome P450 family. Heme serves as cofactor.

It localises to the microsome membrane. The catalysed reaction is xanthotoxin + reduced [NADPH--hemoprotein reductase] + O2 = 5-hydroxyxanthotoxin + oxidized [NADPH--hemoprotein reductase] + H2O + 2 H(+). The protein operates within secondary metabolite biosynthesis. Its function is as follows. Involved in the biosynthesis of coumarins and furanocoumarins (FCs), natural products required for defense responses against attacks by predators with potential medical and agroindustrial usages such as anticoagulant, rodenticide and artificial vanilla substitutes. Catalyzes the conversion of xanthotoxin into 5-hydroxyxanthotoxin. In Pastinaca sativa (Wild parsnip), this protein is 5-OH-xanthotoxin synthase.